The sequence spans 254 residues: uncharacterized protein (254 aa).

The ABC transporter domain occupies 6–239 (LSVDGVEFAY…NIKAVYGVDA (234 aa)). ATP is bound at residue 38–45 (GVNGAGKS).

Belongs to the ABC transporter superfamily.

This is an uncharacterized protein from Methanocaldococcus jannaschii (strain ATCC 43067 / DSM 2661 / JAL-1 / JCM 10045 / NBRC 100440) (Methanococcus jannaschii).